Reading from the N-terminus, the 447-residue chain is N-succinylarginine dihydrolase (447 aa).

Substrate-binding positions include 19 to 28 (AGLSFGNEAS), Asn110, and 137 to 138 (HR). Residue Glu174 is part of the active site. Arg212 contributes to the substrate binding site. The active site involves His248. Positions 250 and 359 each coordinate substrate. Cys365 acts as the Nucleophile in catalysis.

Belongs to the succinylarginine dihydrolase family. In terms of assembly, homodimer.

It catalyses the reaction N(2)-succinyl-L-arginine + 2 H2O + 2 H(+) = N(2)-succinyl-L-ornithine + 2 NH4(+) + CO2. It functions in the pathway amino-acid degradation; L-arginine degradation via AST pathway; L-glutamate and succinate from L-arginine: step 2/5. In terms of biological role, catalyzes the hydrolysis of N(2)-succinylarginine into N(2)-succinylornithine, ammonia and CO(2). The protein is N-succinylarginine dihydrolase of Salmonella schwarzengrund (strain CVM19633).